Here is a 154-residue protein sequence, read N- to C-terminus: Urease accessory protein UreE (154 aa).

Residues 135-154 (YGHGRTFGHDHGHAHDHHHA) form a disordered region.

The protein belongs to the UreE family.

It localises to the cytoplasm. Its function is as follows. Involved in urease metallocenter assembly. Binds nickel. Probably functions as a nickel donor during metallocenter assembly. This Paracoccus denitrificans (strain Pd 1222) protein is Urease accessory protein UreE.